The following is a 454-amino-acid chain: Asparagine--tRNA ligase (454 aa).

This sequence belongs to the class-II aminoacyl-tRNA synthetase family. As to quaternary structure, homodimer.

It localises to the cytoplasm. It carries out the reaction tRNA(Asn) + L-asparagine + ATP = L-asparaginyl-tRNA(Asn) + AMP + diphosphate + H(+). The polypeptide is Asparagine--tRNA ligase (Mycoplasma capricolum subsp. capricolum (strain California kid / ATCC 27343 / NCTC 10154)).